The chain runs to 148 residues: SsrA-binding protein (148 aa).

This sequence belongs to the SmpB family.

The protein localises to the cytoplasm. Required for rescue of stalled ribosomes mediated by trans-translation. Binds to transfer-messenger RNA (tmRNA), required for stable association of tmRNA with ribosomes. tmRNA and SmpB together mimic tRNA shape, replacing the anticodon stem-loop with SmpB. tmRNA is encoded by the ssrA gene; the 2 termini fold to resemble tRNA(Ala) and it encodes a 'tag peptide', a short internal open reading frame. During trans-translation Ala-aminoacylated tmRNA acts like a tRNA, entering the A-site of stalled ribosomes, displacing the stalled mRNA. The ribosome then switches to translate the ORF on the tmRNA; the nascent peptide is terminated with the 'tag peptide' encoded by the tmRNA and targeted for degradation. The ribosome is freed to recommence translation, which seems to be the essential function of trans-translation. The chain is SsrA-binding protein from Pseudothermotoga lettingae (strain ATCC BAA-301 / DSM 14385 / NBRC 107922 / TMO) (Thermotoga lettingae).